The sequence spans 807 residues: Enhancer of polycomb homolog 2 (807 aa).

Glycyl lysine isopeptide (Lys-Gly) (interchain with G-Cter in SUMO2) cross-links involve residues Lys-135, Lys-195, Lys-324, and Lys-362. The segment at 376-396 (DEFPQVLSPVSEPEEENDPDG) is disordered. At Ser-538 the chain carries Phosphoserine. Positions 600–613 (QLQQKQQSQHSSQQ) are enriched in low complexity. Disordered stretches follow at residues 600-628 (QLQQ…DCMS) and 645-673 (SAPV…QPSG). Composition is skewed to polar residues over residues 614-628 (THPK…DCMS) and 657-673 (EQNT…QPSG). Position 754 is a phosphoserine (Ser-754).

The protein belongs to the enhancer of polycomb family.

The protein localises to the nucleus. In terms of biological role, may play a role in transcription or DNA repair. This is Enhancer of polycomb homolog 2 (EPC2) from Homo sapiens (Human).